Here is a 262-residue protein sequence, read N- to C-terminus: Global transcriptional regulator CodY (262 aa).

A GAF domain region spans residues 1-159; sequence MAHLLEKTRK…SSTVVGIQLL (159 aa). Residues 207–226 constitute a DNA-binding region (H-T-H motif); that stretch reads ASVIADRIGITRSVIVNALR.

This sequence belongs to the CodY family.

It localises to the cytoplasm. DNA-binding global transcriptional regulator which is involved in the adaptive response to starvation and acts by directly or indirectly controlling the expression of numerous genes in response to nutrient availability. During rapid exponential growth, CodY is highly active and represses genes whose products allow adaptation to nutrient depletion. The protein is Global transcriptional regulator CodY of Streptococcus gordonii (strain Challis / ATCC 35105 / BCRC 15272 / CH1 / DL1 / V288).